Here is a 219-residue protein sequence, read N- to C-terminus: Large ribosomal subunit protein uL3 (219 aa).

It belongs to the universal ribosomal protein uL3 family. Part of the 50S ribosomal subunit. Forms a cluster with proteins L14 and L19.

In terms of biological role, one of the primary rRNA binding proteins, it binds directly near the 3'-end of the 23S rRNA, where it nucleates assembly of the 50S subunit. The polypeptide is Large ribosomal subunit protein uL3 (Corynebacterium kroppenstedtii (strain DSM 44385 / JCM 11950 / CIP 105744 / CCUG 35717)).